A 173-amino-acid polypeptide reads, in one-letter code: ATP synthase subunit b 1 (173 aa).

A helical membrane pass occupies residues 15-37 (TFWVTVAVLIFLAFFGRKIVGAI).

This sequence belongs to the ATPase B chain family. As to quaternary structure, F-type ATPases have 2 components, F(1) - the catalytic core - and F(0) - the membrane proton channel. F(1) has five subunits: alpha(3), beta(3), gamma(1), delta(1), epsilon(1). F(0) has three main subunits: a(1), b(2) and c(10-14). The alpha and beta chains form an alternating ring which encloses part of the gamma chain. F(1) is attached to F(0) by a central stalk formed by the gamma and epsilon chains, while a peripheral stalk is formed by the delta and b chains.

The protein resides in the cell inner membrane. Its function is as follows. F(1)F(0) ATP synthase produces ATP from ADP in the presence of a proton or sodium gradient. F-type ATPases consist of two structural domains, F(1) containing the extramembraneous catalytic core and F(0) containing the membrane proton channel, linked together by a central stalk and a peripheral stalk. During catalysis, ATP synthesis in the catalytic domain of F(1) is coupled via a rotary mechanism of the central stalk subunits to proton translocation. In terms of biological role, component of the F(0) channel, it forms part of the peripheral stalk, linking F(1) to F(0). This is ATP synthase subunit b 1 from Acidiphilium cryptum (strain JF-5).